We begin with the raw amino-acid sequence, 183 residues long: MVPLAILVGTPKAWKKEVLPGSIPVLTALTQMSSGATAPALAGAATLLETITFLISVNGSLVKTKPTLPLTKGNNFSKSGKSDKKPLMALLTMVFLPIKTTALPLNSFLTSCICWEETLSTPTTNKDLYSSKYSLNLAKYSAFFSRMPPISNLLYVFIRLFAGCLKVFRLCILWLKLEKRIEN.

Residues 153–175 traverse the membrane as a helical segment; the sequence is LLYVFIRLFAGCLKVFRLCILWL.

It is found in the membrane. This is an uncharacterized protein from Saccharomyces cerevisiae (strain ATCC 204508 / S288c) (Baker's yeast).